The primary structure comprises 236 residues: Baculoviral IAP repeat-containing protein 8 (236 aa).

The stretch at 7 to 70 (RLITFGTWMY…KWYPGCKYLL (64 aa)) is one BIR repeat. Positions 39, 42, 59, and 66 each coordinate Zn(2+). An RING-type zinc finger spans residues 189–224 (CKICMDRHIAVVFIPCGHLVTCKQCAEAVDRCPMCS).

The protein belongs to the IAP family. In terms of assembly, binds to caspase-9. Testis specific in normal tissues.

It is found in the cytoplasm. Its function is as follows. Protects against apoptosis mediated by BAX. The polypeptide is Baculoviral IAP repeat-containing protein 8 (BIRC8) (Homo sapiens (Human)).